The primary structure comprises 343 residues: Multidrug resistance protein MdtN (343 aa).

Residues Met-1–Lys-12 lie on the Cytoplasmic side of the membrane. Residues Phe-13–Val-33 traverse the membrane as a helical; Signal-anchor for type II membrane protein segment. The Periplasmic segment spans residues Asp-34–Gln-343.

It belongs to the membrane fusion protein (MFP) (TC 8.A.1) family. In terms of assembly, could be part of a tripartite efflux system composed of MdtN, MdtO and MdtP.

It is found in the cell inner membrane. Its function is as follows. Could be involved in resistance to puromycin, acriflavine and tetraphenylarsonium chloride. The chain is Multidrug resistance protein MdtN (mdtN) from Escherichia coli (strain K12).